The following is a 427-amino-acid chain: Enolase (427 aa).

Gln163 serves as a coordination point for (2R)-2-phosphoglycerate. Catalysis depends on Glu205, which acts as the Proton donor. Mg(2+) is bound by residues Asp242, Glu285, and Asp312. Positions 337, 366, 367, and 388 each coordinate (2R)-2-phosphoglycerate. Lys337 functions as the Proton acceptor in the catalytic mechanism.

Belongs to the enolase family. Mg(2+) serves as cofactor.

The protein resides in the cytoplasm. It is found in the secreted. It localises to the cell surface. It carries out the reaction (2R)-2-phosphoglycerate = phosphoenolpyruvate + H2O. Its pathway is carbohydrate degradation; glycolysis; pyruvate from D-glyceraldehyde 3-phosphate: step 4/5. In terms of biological role, catalyzes the reversible conversion of 2-phosphoglycerate (2-PG) into phosphoenolpyruvate (PEP). It is essential for the degradation of carbohydrates via glycolysis. The chain is Enolase from Bradyrhizobium diazoefficiens (strain JCM 10833 / BCRC 13528 / IAM 13628 / NBRC 14792 / USDA 110).